We begin with the raw amino-acid sequence, 78 residues long: Large ribosomal subunit protein bL28 (78 aa).

The interval 1–23 (MSRICQITGKKPLSGNKRSHSMN) is disordered.

This sequence belongs to the bacterial ribosomal protein bL28 family.

In Wigglesworthia glossinidia brevipalpis, this protein is Large ribosomal subunit protein bL28.